Consider the following 166-residue polypeptide: ATP synthase subunit b (166 aa).

Residues Leu10–Phe30 form a helical membrane-spanning segment.

This sequence belongs to the ATPase B chain family. F-type ATPases have 2 components, F(1) - the catalytic core - and F(0) - the membrane proton channel. F(1) has five subunits: alpha(3), beta(3), gamma(1), delta(1), epsilon(1). F(0) has three main subunits: a(1), b(2) and c(10-14). The alpha and beta chains form an alternating ring which encloses part of the gamma chain. F(1) is attached to F(0) by a central stalk formed by the gamma and epsilon chains, while a peripheral stalk is formed by the delta and b chains.

It localises to the cell inner membrane. F(1)F(0) ATP synthase produces ATP from ADP in the presence of a proton or sodium gradient. F-type ATPases consist of two structural domains, F(1) containing the extramembraneous catalytic core and F(0) containing the membrane proton channel, linked together by a central stalk and a peripheral stalk. During catalysis, ATP synthesis in the catalytic domain of F(1) is coupled via a rotary mechanism of the central stalk subunits to proton translocation. Functionally, component of the F(0) channel, it forms part of the peripheral stalk, linking F(1) to F(0). This is ATP synthase subunit b from Phocaeicola vulgatus (strain ATCC 8482 / DSM 1447 / JCM 5826 / CCUG 4940 / NBRC 14291 / NCTC 11154) (Bacteroides vulgatus).